A 144-amino-acid polypeptide reads, in one-letter code: MIALIQRVSEAAVRVDGEVVGEIEQGLLVLLGVEKGDDEAKAKRLMERVTTYRVFGDEDDKMNLNVKQVEGKVLVVSQFTLPADTKKGTRAGFSRGAHPEDAERLYNYFSDQCESVLPTERGRFAADMKVSLVNDGPVTFWLQV.

The short motif at 136–137 (GP) is the Gly-cisPro motif, important for rejection of L-amino acids element.

It belongs to the DTD family. In terms of assembly, homodimer.

Its subcellular location is the cytoplasm. It catalyses the reaction glycyl-tRNA(Ala) + H2O = tRNA(Ala) + glycine + H(+). The enzyme catalyses a D-aminoacyl-tRNA + H2O = a tRNA + a D-alpha-amino acid + H(+). Its function is as follows. An aminoacyl-tRNA editing enzyme that deacylates mischarged D-aminoacyl-tRNAs. Also deacylates mischarged glycyl-tRNA(Ala), protecting cells against glycine mischarging by AlaRS. Acts via tRNA-based rather than protein-based catalysis; rejects L-amino acids rather than detecting D-amino acids in the active site. By recycling D-aminoacyl-tRNA to D-amino acids and free tRNA molecules, this enzyme counteracts the toxicity associated with the formation of D-aminoacyl-tRNA entities in vivo and helps enforce protein L-homochirality. This Vibrio atlanticus (strain LGP32) (Vibrio splendidus (strain Mel32)) protein is D-aminoacyl-tRNA deacylase.